The primary structure comprises 472 residues: Proline--tRNA ligase (472 aa).

This sequence belongs to the class-II aminoacyl-tRNA synthetase family. ProS type 3 subfamily. Homodimer.

It localises to the cytoplasm. It carries out the reaction tRNA(Pro) + L-proline + ATP = L-prolyl-tRNA(Pro) + AMP + diphosphate. In terms of biological role, catalyzes the attachment of proline to tRNA(Pro) in a two-step reaction: proline is first activated by ATP to form Pro-AMP and then transferred to the acceptor end of tRNA(Pro). This chain is Proline--tRNA ligase, found in Ureaplasma urealyticum serovar 10 (strain ATCC 33699 / Western).